Reading from the N-terminus, the 436-residue chain is MHIAVVGLSHRTAPVEIREKLSIPEQTMETSLQTLRGNDQVLEVSILSTCNRLEIYTLVRHPERGISAISDFLGQHSGLAAEDLSPHLFNFHHDEAVAHLMRVAAGLDSLVLGEGQILSQVKKMVRLGQEHKSMGPILNRLLTQAVSTGKRVRSETNLGTGAVSISSAAVELAQLKLGQAQGEDQLMTLESELVAVVGAGRMSRLLLQHLQAKGCSGVMLLNRTRQRAEDLSADFPELPVECRPLDDLNHCLSTCSLVFTSTAADDPIVDASLLKQLKRRSFLRLIDIGVPRNIASDVVDLPGVESHDVDDLHEVVSRNQEARQQMAKEAEVVLQEETRLFLEWWDSLEAVPTINRLRATLEAIRAEELQKALSRMGPDFSARERKVVEALSKGIINKILHTPVTQLRAPQARQERQQALRVVACLFELDPPLEDG.

Substrate contacts are provided by residues 49–52 (TCNR), S109, 114–116 (EGQ), and Q120. Catalysis depends on C50, which acts as the Nucleophile. 198 to 203 (GAGRMS) provides a ligand contact to NADP(+).

Belongs to the glutamyl-tRNA reductase family. Homodimer.

It carries out the reaction (S)-4-amino-5-oxopentanoate + tRNA(Glu) + NADP(+) = L-glutamyl-tRNA(Glu) + NADPH + H(+). The protein operates within porphyrin-containing compound metabolism; protoporphyrin-IX biosynthesis; 5-aminolevulinate from L-glutamyl-tRNA(Glu): step 1/2. Its pathway is porphyrin-containing compound metabolism; chlorophyll biosynthesis. Its function is as follows. Catalyzes the NADPH-dependent reduction of glutamyl-tRNA(Glu) to glutamate 1-semialdehyde (GSA). The protein is Glutamyl-tRNA reductase of Prochlorococcus marinus (strain MIT 9303).